The sequence spans 484 residues: Poly(A) RNA polymerase GLD2 (484 aa).

A phosphoserine mark is found at Ser62 and Ser69. The short motif at 76 to 92 (KRISDEKAFRLDGKRQR) is the Nuclear localization signal element. Position 95 is a phosphoserine (Ser95). Asp213 and Asp215 together coordinate Mg(2+). One can recognise a PAP-associated domain in the interval 386 to 440 (SLGDLLLGFLKYYATEFDWNTQMISVREAKAIPRPDDMEWRNKYICVEEPFDGTN).

This sequence belongs to the DNA polymerase type-B-like family. GLD2 subfamily. Interacts with CPEB1, CPEB2, CPSF1 and PABPC1. Interacts with QKI isoform QKI7; promoting recruitment to miRNA miR-122 and miR-122 stabilization. Mg(2+) serves as cofactor. It depends on Mn(2+) as a cofactor.

Its subcellular location is the cytoplasm. It is found in the nucleus. It carries out the reaction RNA(n) + ATP = RNA(n)-3'-adenine ribonucleotide + diphosphate. Cytoplasmic poly(A) RNA polymerase that adds successive AMP monomers to the 3'-end of specific RNAs, forming a poly(A) tail. In contrast to the canonical nuclear poly(A) RNA polymerase, it only adds poly(A) to selected cytoplasmic mRNAs. Does not play a role in replication-dependent histone mRNA degradation. Adds a single nucleotide to the 3' end of specific miRNAs, monoadenylation stabilizes and prolongs the activity of some but not all miRNAs. The sequence is that of Poly(A) RNA polymerase GLD2 from Rattus norvegicus (Rat).